Here is a 729-residue protein sequence, read N- to C-terminus: Solute carrier family 15 member 2 (729 aa).

The segment at 1–35 (MNPFQKNESKETLFSPVSTEEMLPRPPSPPKKSPP) is disordered. At 1–57 (MNPFQKNESKETLFSPVSTEEMLPRPPSPPKKSPPKIFGSSYPVSIAFIVVNEFCER) the chain is on the cytoplasmic side. Residue S9 is modified to Phosphoserine. T12 bears the Phosphothreonine mark. S28 bears the Phosphoserine mark. A helical transmembrane segment spans residues 58–78 (FSYYGMKAVLTLYFLYFLHWN). Residues 79–87 (EDTSTSVYH) lie on the Extracellular side of the membrane. The helical transmembrane segment at 88–108 (AFSSLCYFTPILGAAIADSWL) threads the bilayer. Residues 109-113 (GKFKT) lie on the Cytoplasmic side of the membrane. A helical membrane pass occupies residues 114–134 (IIYLSLVYVLGHVFKSLGAIP). The Extracellular segment spans residues 135–139 (ILGGK). A helical transmembrane segment spans residues 140-160 (MLHTILSLVGLSLIALGTGGI). Topologically, residues 161 to 183 (KPCVAAFGGDQFEEEHAEARTRY) are cytoplasmic. Residues 184 to 204 (FSVFYLAINAGSLISTFITPM) form a helical membrane-spanning segment. Topologically, residues 205 to 217 (LRGDVKCFGQDCY) are extracellular. A helical transmembrane segment spans residues 218-238 (ALAFGVPGLLMVLALVVFAMG). Residues 239–295 (SKMYRKPPPEGNIVAQVIKCIWFALCNRFRNRSGDLPKRQHWLDWAAEKYPKHLIAD) are Cytoplasmic-facing. A helical transmembrane segment spans residues 296-316 (VKALTRVLFLYIPLPMFWALL). Residues 317–343 (DQQGSRWTLQANKMNGDLGFFVLQPDQ) lie on the Extracellular side of the membrane. Residues 344-364 (MQVLNPFLVLIFIPLFDLVIY) traverse the membrane as a helical segment. Topologically, residues 365 to 380 (RLISKCRINFSSLRKM) are cytoplasmic. Residues 381 to 401 (AVGMILACLAFAVAALVETKI) traverse the membrane as a helical segment. Topologically, residues 402–611 (NGMIHPQPAS…PVNKLSIAWQ (210 aa)) are extracellular. The segment at 402–611 (NGMIHPQPAS…PVNKLSIAWQ (210 aa)) is extracellular domain (ECD). Residues N435, N448, N528, and N587 are each glycosylated (N-linked (GlcNAc...) asparagine). The chain crosses the membrane as a helical span at residues 612-632 (LPQYVLVTAAEVMFSVTGLEF). The Cytoplasmic portion of the chain corresponds to 633 to 643 (SYSQAPSSMKS). Residues 644–664 (VLQAAWLLTVAVGNIIVLVVA) traverse the membrane as a helical segment. Residues 665–674 (QFSGLAQWAE) lie on the Extracellular side of the membrane. A helical membrane pass occupies residues 675 to 695 (FVLFSCLLLVVCLIFSVMAYY). At 696 to 729 (YVPLKSEDTREATDKQIPAVQGNMINLETKNTRL) the chain is on the cytoplasmic side.

Belongs to the major facilitator superfamily. Proton-dependent oligopeptide transporter (POT/PTR) (TC 2.A.17) family. As to quaternary structure, interacts (via extracellular domain region) with trypsin. As to expression, strongly expressed in kidney cortex and medulla. Also detected in brain, lung and spleen. Expressed in choroid plexus.

The protein localises to the apical cell membrane. The protein resides in the cytoplasmic vesicle. Its subcellular location is the phagosome membrane. It localises to the cell membrane. The catalysed reaction is a dipeptide(out) + 2 H(+)(out) = a dipeptide(in) + 2 H(+)(in). The enzyme catalyses glycyl-L-leucine(out) + 2 H(+)(out) = glycyl-L-leucine(in) + 2 H(+)(in). It carries out the reaction glycyl-L-lysine(out) + 2 H(+)(out) = glycyl-L-lysine(in) + 2 H(+)(in). It catalyses the reaction glycyl-L-glutamate(out) + 3 H(+)(out) = glycyl-L-glutamate(in) + 3 H(+)(in). The catalysed reaction is L-alanyl-L-alanine(out) + 2 H(+)(out) = L-alanyl-L-alanine(in) + 2 H(+)(in). The enzyme catalyses an L-amino acid tripeptide(out) + 2 H(+)(out) = an L-amino acid tripeptide(in) + 2 H(+)(in). It carries out the reaction N-acetyl-D-muramoyl-L-alanyl-D-isoglutamine(out) + 3 H(+)(out) = N-acetyl-D-muramoyl-L-alanyl-D-isoglutamine(in) + 3 H(+)(in). It catalyses the reaction carnosine(out) + 2 H(+)(out) = carnosine(in) + 2 H(+)(in). Its function is as follows. Proton-coupled amino-acid transporter that transports oligopeptides of 2 to 4 amino acids with a preference for dipeptides. Transports neutral and anionic dipeptides with a proton to peptide stoichiometry of 2:1 or 3:1. In kidney, involved in the absorption of circulating di- and tripeptides from the glomerular filtrate. Can also transport beta-lactam antibiotics, such as the aminocephalosporin cefadroxil, and other antiviral and anticancer drugs. Transports the dipeptide-like aminopeptidase inhibitor bestatin. Also able to transport carnosine. Involved in innate immunity by promoting the detection of microbial pathogens by NOD-like receptors (NLRs). Mediates transport of bacterial peptidoglycans across the plasma membrane or, in macrophages, the phagosome membrane: catalyzes the transport of certain bacterial peptidoglycans, such as muramyl dipeptide (MDP), the NOD2 ligand. The chain is Solute carrier family 15 member 2 from Rattus norvegicus (Rat).